A 1026-amino-acid polypeptide reads, in one-letter code: MEEQVANAIEIAWNPSSDQALKAQAFDYLNQLRTDPSGWQVCLALFTKTPQHSEIIRHVALEVVNSAAQAGLIDPQALGYVRDGLMNYLRQVYGQENANPDPPNIQNKIAQTITFLFSALYGSGWESFFDDLLSLTYKGASSTSPDNMLGIVFYLRVVNSIHDEIGDVLVSRSRTEQDRANSLKDLIRMRDMQKIASSWQQILSEWRDGNDLIVEMCLKAVGSWVGWIDISLVVNQTMLDLLFQQLARAQKAELRAGEEKVRDAAVDVFTEIIGKKMKPEDKIDMIIFLNLDTIVSQLSNSPPLCENRFTFKYDTDLAETVAKLVNSTVVDIVRALEQENISAECREKANGLLQAFLPHILRYFSDEYDEVCSTVIPCGSDLLQYLRKVSKTDPSLTAQHSPILLPILKAIIAKMRYDETSSWGDEDDQTDEAEFQELRKRLAIMQQTVASVNEQLYIDAVSEVVATTFENLRQSGAQLDWRDLDLALHEMFLFGDIAVKAGSLYTKNQPNNQAAERLIEMMSRMVESDIRSFTHPATQLQYMEICVRYSSFFLYHTNLIPGVLESFLQLVHHPTKKVKTRSWYLFQRLVKQLRSHIGNVAQTVVQALGDLLVIQAEIPTEGADGDEMSSEDHEGSADAVFNSQLYLFEAVGIICSTPTVAADKQVLYVQSVLNPVFMDMEKNLAPAKSNDERALLQIHHDIMALGTLAKGFSDWMPGTSSPTSLPAPEVSEAFLQVSEATLVALESLKTSFNIRTAARFAFSRLIGVLGSRILPQLPRWIDGLLTQTSTRDEMALFLRLLDQVIFGFKGEIYAILDTLLTPFLQRVFAGIADPTTGTDDEIQLAELKREYLNFLLAVLNNDLGAVIISERNQPMFDTVITTIEHFAKDIEDFTTAKMAFSVLSKMGSSWGGPDIAPEATNGASQQVALPGFAQFMISRMSPLCWALPATPSFNPKDAQAKQVLAEAGGLQRTIYCKTGMEYIQYLRDQELPGMGMGGELIEEFLNALGQLDLKGFRQFFPVCTAR.

This sequence belongs to the exportin family.

The protein resides in the nucleus. It is found in the cytoplasm. TRNA nucleus export receptor which facilitates tRNA translocation across the nuclear pore complex. Involved in pre-tRNA splicing, probably by affecting the interaction of pre-tRNA with splicing endonuclease. In Aspergillus oryzae (strain ATCC 42149 / RIB 40) (Yellow koji mold), this protein is Exportin-T (los1).